The following is a 408-amino-acid chain: Snake venom metalloproteinase BaP1 (408 aa).

The N-terminal stretch at 1–20 (MIEVLLVTICLAVFPYQGSS) is a signal peptide. The propeptide occupies 21 to 191 (IILESGNVND…KASQSNLTPE (171 aa)). Glutamine 192 is subject to Pyrrolidone carboxylic acid. The region spanning 198–394 (RYIELAVVAD…HNPQCILNKP (197 aa)) is the Peptidase M12B domain. 3 disulfides stabilise this stretch: cysteine 309-cysteine 389, cysteine 349-cysteine 373, and cysteine 351-cysteine 356. A Zn(2+)-binding site is contributed by histidine 334. The active site involves glutamate 335. Histidine 338 and histidine 344 together coordinate Zn(2+). Positions 395–408 (LLTVSGNELLEAGE) are excised as a propeptide.

The protein belongs to the venom metalloproteinase (M12B) family. P-I subfamily. In terms of assembly, monomer. Requires Zn(2+) as cofactor. In terms of tissue distribution, expressed by the venom gland.

The protein resides in the secreted. Inhibited by EDTA, partially inhibited by o-phenantropine, and not inhibited by PMSF, pepstatin A, and aprotinin. In terms of biological role, zinc metalloprotease that exhibits a weak hemorrhagic activity (with a minimum hemorrhagic dose of 20 ug by intradermal and intramuscular injection into mice). The basal membrane components collagen (all chains of type IV) (COL4A4), laminin and nidogen are all degraded by this toxin. Rapidly degrades the Aalpha-chain (FGA) of fibrinogen, and later on, degrades the Bbeta-chain (FGB) of fibrinogen. Also activates the complement system, and induces rat neutrophil chemotaxis. Induces edema in mouse food pad and shows a mild myotoxicity. This Bothrops asper (Terciopelo) protein is Snake venom metalloproteinase BaP1.